Reading from the N-terminus, the 167-residue chain is Protein-export protein SecB (167 aa).

It belongs to the SecB family. As to quaternary structure, homotetramer, a dimer of dimers. One homotetramer interacts with 1 SecA dimer.

Its subcellular location is the cytoplasm. In terms of biological role, one of the proteins required for the normal export of preproteins out of the cell cytoplasm. It is a molecular chaperone that binds to a subset of precursor proteins, maintaining them in a translocation-competent state. It also specifically binds to its receptor SecA. This is Protein-export protein SecB from Wolbachia pipientis subsp. Culex pipiens (strain wPip).